Here is a 468-residue protein sequence, read N- to C-terminus: MTNAKTLYQKVWDAHIVTAPEGEAPVIYVDRHLVHEVTSPQAFSGLKVAGRKLRAPEKTFATMDHNTSTRSASLDALSPMARTQVETLAQNCKDFGVRLYDIHHPNQGIVHVMGPELGITLPGTVIVCGDSHTATHGAFGALAFGIGTSEVEHVLATQTLRQLKAKTMKIEVRGHVTDGVTAKDIVLAIIGKIGMDGGTGYVVEFCGEAIEALSMEGRMTVCNMAIEMGAKAGMVAPDQTTFDYLAGREFAPKGEDWTEAVAYWKAIKTDDGAVFDAVVELDAADIAPQLTWGTNPGQVVAIDGKVPDPINEANPSTRASMEKALEYIGLSAGTPMTDISINKVFIGSCTNSRIEDLRSAAVHAKGRKVASGVTAIVVPGSGQVKAQAEAEGLDKIFIEAGFEWRLPGCSMCLAMNDDRLEAGDRCASTSNRNFEGRQGRGSRTHLVSPAMAAAAAVAGHFVDIRKPY.

[4Fe-4S] cluster contacts are provided by Cys349, Cys409, and Cys412.

The protein belongs to the aconitase/IPM isomerase family. LeuC type 1 subfamily. Heterodimer of LeuC and LeuD. [4Fe-4S] cluster serves as cofactor.

The catalysed reaction is (2R,3S)-3-isopropylmalate = (2S)-2-isopropylmalate. Its pathway is amino-acid biosynthesis; L-leucine biosynthesis; L-leucine from 3-methyl-2-oxobutanoate: step 2/4. Catalyzes the isomerization between 2-isopropylmalate and 3-isopropylmalate, via the formation of 2-isopropylmaleate. This chain is 3-isopropylmalate dehydratase large subunit, found in Shewanella baltica (strain OS223).